We begin with the raw amino-acid sequence, 428 residues long: Enolase (428 aa).

Q163 lines the (2R)-2-phosphoglycerate pocket. Residue E205 is the Proton donor of the active site. Mg(2+) is bound by residues D242, E286, and D313. (2R)-2-phosphoglycerate is bound by residues K338, R367, S368, and K389. Catalysis depends on K338, which acts as the Proton acceptor.

Belongs to the enolase family. It depends on Mg(2+) as a cofactor.

Its subcellular location is the cytoplasm. It localises to the secreted. The protein localises to the cell surface. It catalyses the reaction (2R)-2-phosphoglycerate = phosphoenolpyruvate + H2O. The protein operates within carbohydrate degradation; glycolysis; pyruvate from D-glyceraldehyde 3-phosphate: step 4/5. Functionally, catalyzes the reversible conversion of 2-phosphoglycerate (2-PG) into phosphoenolpyruvate (PEP). It is essential for the degradation of carbohydrates via glycolysis. In Lactobacillus acidophilus (strain ATCC 700396 / NCK56 / N2 / NCFM), this protein is Enolase.